The chain runs to 267 residues: Tryptophan synthase alpha chain (267 aa).

Residues Glu43 and Asp54 each act as proton acceptor in the active site.

The protein belongs to the TrpA family. Tetramer of two alpha and two beta chains.

The catalysed reaction is (1S,2R)-1-C-(indol-3-yl)glycerol 3-phosphate + L-serine = D-glyceraldehyde 3-phosphate + L-tryptophan + H2O. The protein operates within amino-acid biosynthesis; L-tryptophan biosynthesis; L-tryptophan from chorismate: step 5/5. In terms of biological role, the alpha subunit is responsible for the aldol cleavage of indoleglycerol phosphate to indole and glyceraldehyde 3-phosphate. The chain is Tryptophan synthase alpha chain from Bacillus subtilis (strain 168).